The sequence spans 83 residues: Cytotoxin homolog 5 (83 aa).

The N-terminal stretch at 1 to 21 is a signal peptide; sequence MKTLLLTMVVVTIVCLDLGYT. 4 disulfides stabilise this stretch: C24–C43, C36–C61, C65–C76, and C77–C82.

The protein belongs to the three-finger toxin family. Short-chain subfamily. Orphan group XV sub-subfamily. Expressed by the venom gland.

It localises to the secreted. It is found in the target cell membrane. Has low cytotoxic activity. The polypeptide is Cytotoxin homolog 5 (Naja atra (Chinese cobra)).